Reading from the N-terminus, the 86-residue chain is RNA-binding protein Hfq (86 aa).

In terms of domain architecture, Sm spans Asp-12–Val-73.

This sequence belongs to the Hfq family. As to quaternary structure, homohexamer.

In terms of biological role, RNA chaperone that binds small regulatory RNA (sRNAs) and mRNAs to facilitate mRNA translational regulation in response to envelope stress, environmental stress and changes in metabolite concentrations. Also binds with high specificity to tRNAs. In Thermoanaerobacter pseudethanolicus (strain ATCC 33223 / 39E) (Clostridium thermohydrosulfuricum), this protein is RNA-binding protein Hfq.